Consider the following 126-residue polypeptide: Large ribosomal subunit protein bL12 (126 aa).

The protein belongs to the bacterial ribosomal protein bL12 family. Homodimer. Part of the ribosomal stalk of the 50S ribosomal subunit. Forms a multimeric L10(L12)X complex, where L10 forms an elongated spine to which 2 to 4 L12 dimers bind in a sequential fashion. Binds GTP-bound translation factors.

Functionally, forms part of the ribosomal stalk which helps the ribosome interact with GTP-bound translation factors. Is thus essential for accurate translation. This is Large ribosomal subunit protein bL12 from Teredinibacter turnerae (strain ATCC 39867 / T7901).